We begin with the raw amino-acid sequence, 334 residues long: Cytosolic Fe-S cluster assembly factor NUBP1 homolog (334 aa).

The disordered stretch occupies residues 1–24 (MSSAEVTAAAKPADAPEHCPGTAS). Cys-19, Cys-33, Cys-36, and Cys-42 together coordinate [4Fe-4S] cluster. 72 to 79 (GKGGVGKS) lines the ATP pocket. [4Fe-4S] cluster-binding residues include Cys-247 and Cys-250.

The protein belongs to the Mrp/NBP35 ATP-binding proteins family. NUBP1/NBP35 subfamily. Heterotetramer of 2 NUBP1 and 2 NUBP2 chains. [4Fe-4S] cluster is required as a cofactor.

The protein resides in the cytoplasm. Component of the cytosolic iron-sulfur (Fe/S) protein assembly (CIA) machinery. Required for maturation of extramitochondrial Fe-S proteins. The NUBP1-NUBP2 heterotetramer forms a Fe-S scaffold complex, mediating the de novo assembly of an Fe-S cluster and its transfer to target apoproteins. The protein is Cytosolic Fe-S cluster assembly factor NUBP1 homolog of Culex quinquefasciatus (Southern house mosquito).